The chain runs to 65 residues: DNA gyrase inhibitor YacG (65 aa).

Zn(2+)-binding residues include Cys-9, Cys-12, Cys-28, and Cys-32. The disordered stretch occupies residues Glu-44 to Gln-65. Positions Ser-54–Gln-65 are enriched in acidic residues.

This sequence belongs to the DNA gyrase inhibitor YacG family. In terms of assembly, interacts with GyrB. Zn(2+) serves as cofactor.

In terms of biological role, inhibits all the catalytic activities of DNA gyrase by preventing its interaction with DNA. Acts by binding directly to the C-terminal domain of GyrB, which probably disrupts DNA binding by the gyrase. This Escherichia coli O6:H1 (strain CFT073 / ATCC 700928 / UPEC) protein is DNA gyrase inhibitor YacG.